Consider the following 192-residue polypeptide: Large ribosomal subunit protein bL9 (192 aa).

The tract at residues 172–192 (DALRPEDFFDPEADGVDEDEA) is disordered. Acidic residues predominate over residues 179–192 (FFDPEADGVDEDEA).

Belongs to the bacterial ribosomal protein bL9 family.

Binds to the 23S rRNA. In Rhizobium johnstonii (strain DSM 114642 / LMG 32736 / 3841) (Rhizobium leguminosarum bv. viciae), this protein is Large ribosomal subunit protein bL9.